The chain runs to 478 residues: UDP-N-acetylmuramate--L-alanine ligase (478 aa).

Gly125–Thr131 contacts ATP.

This sequence belongs to the MurCDEF family.

Its subcellular location is the cytoplasm. It catalyses the reaction UDP-N-acetyl-alpha-D-muramate + L-alanine + ATP = UDP-N-acetyl-alpha-D-muramoyl-L-alanine + ADP + phosphate + H(+). The protein operates within cell wall biogenesis; peptidoglycan biosynthesis. Its function is as follows. Cell wall formation. This chain is UDP-N-acetylmuramate--L-alanine ligase, found in Dichelobacter nodosus (strain VCS1703A).